We begin with the raw amino-acid sequence, 67 residues long: DNA-directed RNA polymerase subunit omega (67 aa).

It belongs to the RNA polymerase subunit omega family. In terms of assembly, the RNAP catalytic core consists of 2 alpha, 1 beta, 1 beta' and 1 omega subunit. When a sigma factor is associated with the core the holoenzyme is formed, which can initiate transcription.

It catalyses the reaction RNA(n) + a ribonucleoside 5'-triphosphate = RNA(n+1) + diphosphate. Promotes RNA polymerase assembly. Latches the N- and C-terminal regions of the beta' subunit thereby facilitating its interaction with the beta and alpha subunits. The protein is DNA-directed RNA polymerase subunit omega of Dictyoglomus turgidum (strain DSM 6724 / Z-1310).